A 278-amino-acid chain; its full sequence is uncharacterized protein (278 aa).

Basic and acidic residues predominate over residues 1-16 (MFGLKVKDAQKDDQKS). 2 disordered regions span residues 1 to 86 (MFGL…RGSN) and 98 to 126 (FGTT…TPWL). 2 stretches are compositionally biased toward low complexity: residues 33–45 (QGTS…RGSS) and 99–117 (GTTS…STPS).

This sequence belongs to the adhesin P1 family.

This is an uncharacterized protein from Mycoplasma pneumoniae (strain ATCC 29342 / M129 / Subtype 1) (Mycoplasmoides pneumoniae).